The chain runs to 264 residues: 3-methyl-2-oxobutanoate hydroxymethyltransferase (264 aa).

Residues Asp43 and Asp82 each contribute to the Mg(2+) site. Residues 43 to 44, Asp82, and Lys111 contribute to the 3-methyl-2-oxobutanoate site; that span reads DS. Position 113 (Glu113) interacts with Mg(2+). Glu180 functions as the Proton acceptor in the catalytic mechanism.

Belongs to the PanB family. In terms of assembly, homodecamer; pentamer of dimers. Requires Mg(2+) as cofactor.

The protein resides in the cytoplasm. The enzyme catalyses 3-methyl-2-oxobutanoate + (6R)-5,10-methylene-5,6,7,8-tetrahydrofolate + H2O = 2-dehydropantoate + (6S)-5,6,7,8-tetrahydrofolate. The protein operates within cofactor biosynthesis; (R)-pantothenate biosynthesis; (R)-pantoate from 3-methyl-2-oxobutanoate: step 1/2. Functionally, catalyzes the reversible reaction in which hydroxymethyl group from 5,10-methylenetetrahydrofolate is transferred onto alpha-ketoisovalerate to form ketopantoate. This Campylobacter fetus subsp. fetus (strain 82-40) protein is 3-methyl-2-oxobutanoate hydroxymethyltransferase.